Reading from the N-terminus, the 864-residue chain is MQEQYNPAEVEAQAQQYWEEHQSFNVIEDPGKEKFYCLAMFPYPSGKLHMGHVRNYTITDVIARYQRMQGKNVLHPMGWDAFGLPAENAALKHNTAPAKWTYSNTDHMRNQLKQLGFGFDWSRELTTCKPEYYQWEQWFFTRLYEKGLVYKKMSTVNWDPIDQTVLANEQVIDGRGWRSGALVERKEIPQWFIKITDYAEELLNDLDKLPNWPEQVKTMQRNWIGKSRGLEMRFDLQSPVGEFTSFDIYTTRPDTLMGVTYVSLAAEHPIAKYLADSNPALAQFIADCKVQSVAEADMATMEKKGMDTGIKALHPITGEPVAVWVANYVLMDYGSGAVMAVPAHDQRDYEFAQKYHLGITQVIAPQNGETIDLSQAAFTDKGVLVNSGEYDGLDFNAAFDAIASTLEMANKGRVKTNYRLRDWGVSRQRYWGAPIPMFNLPEGGEIPVPAHKLPILLPEEVVMNGVQSPIKADPEWKKDELDGQYVERETDTFDTFMESSWYYARYTCPNFTDGMINKAAADYWLPVDQYVGGIEHAILHLLYSRFFHKLMRDEGLVSGDEPFERLLCQGMVNAESFFIKSEGKENWIEPENVVIERDDKGRFIAAKHKITGDAVEFGGVIKMSKSKANGVDPESVINQYGADTVRLFTMFAAPPEQSLEWSDSGVEGASRFLRRLWKAVEGHINAGTPGKLDAASLPQQQKDLRRKTHETIQKVSDDYGRRQTFNTAIAAVMELLNETSKLSDRANPQGLAVEREALEAAILLLAPIVPHITQALWIELGNSGIPLNQPWPTLDESALVRSTIEVVVQVNGKLRGKIDAAVDAPKELLEQIAVQQENVQKFLEGVTVRKVIVVPNKLVNIVAN.

The short motif at 42–52 is the 'HIGH' region element; the sequence is PYPSGKLHMGH. A 'KMSKS' region motif is present at residues 622-626; sequence KMSKS. Lys-625 provides a ligand contact to ATP.

The protein belongs to the class-I aminoacyl-tRNA synthetase family.

It is found in the cytoplasm. It catalyses the reaction tRNA(Leu) + L-leucine + ATP = L-leucyl-tRNA(Leu) + AMP + diphosphate. This chain is Leucine--tRNA ligase, found in Cellvibrio japonicus (strain Ueda107) (Pseudomonas fluorescens subsp. cellulosa).